The chain runs to 204 residues: MAGNGSAPDTATHQVRQFDQARAEAAVRELLFAIGEDPDRHGLAETPARVARAYREMFAGLYTDPDSVLNTMFDEEHDELVLVKEIPLYSTCEHHLVSFHGVAHVGYIPGNDGRVTGLSKIARLVDLYAKRPQVQERLTSQIADALVKKLNPRGVIVVVEAEHLCMAMRGVRKPGAVTTTSAVRGLFKTNAASRAEALDLILRK.

3 residues coordinate Zn(2+): C92, H95, and C165.

This sequence belongs to the GTP cyclohydrolase I family. Homomer.

The catalysed reaction is GTP + H2O = 7,8-dihydroneopterin 3'-triphosphate + formate + H(+). The protein operates within cofactor biosynthesis; 7,8-dihydroneopterin triphosphate biosynthesis; 7,8-dihydroneopterin triphosphate from GTP: step 1/1. The polypeptide is GTP cyclohydrolase 1 (Mycolicibacterium paratuberculosis (strain ATCC BAA-968 / K-10) (Mycobacterium paratuberculosis)).